A 180-amino-acid chain; its full sequence is MKTIEVDEELYRFIASQTQHIGESASDILRRLLMQSSPSDLAVSAPVEVQKKGIVVSKDAGKEASVDRVKAVRTLLISDEFSALDKAIDRFLTVLSELYKIDSKAFSEATEVKGRTRVYFADNQETLIASGKTTKPREIVGTPFWVITNTNTNRKRHMVELLMERMGFQHDLTEKVCAAI.

Residues 115 to 119 (RTRVY) are interaction with DNA.

The protein belongs to the SeqA family. Homodimer. Polymerizes to form helical filaments.

The protein resides in the cytoplasm. Its function is as follows. Negative regulator of replication initiation, which contributes to regulation of DNA replication and ensures that replication initiation occurs exactly once per chromosome per cell cycle. Binds to pairs of hemimethylated GATC sequences in the oriC region, thus preventing assembly of replication proteins and re-initiation at newly replicated origins. Repression is relieved when the region becomes fully methylated. This Aliivibrio fischeri (strain ATCC 700601 / ES114) (Vibrio fischeri) protein is Negative modulator of initiation of replication.